We begin with the raw amino-acid sequence, 401 residues long: NAD(P)H-quinone oxidoreductase subunit H, chloroplastic (401 aa).

The protein belongs to the complex I 49 kDa subunit family. As to quaternary structure, NDH is composed of at least 16 different subunits, 5 of which are encoded in the nucleus.

It is found in the plastid. The protein resides in the chloroplast thylakoid membrane. It carries out the reaction a plastoquinone + NADH + (n+1) H(+)(in) = a plastoquinol + NAD(+) + n H(+)(out). The enzyme catalyses a plastoquinone + NADPH + (n+1) H(+)(in) = a plastoquinol + NADP(+) + n H(+)(out). Functionally, NDH shuttles electrons from NAD(P)H:plastoquinone, via FMN and iron-sulfur (Fe-S) centers, to quinones in the photosynthetic chain and possibly in a chloroplast respiratory chain. The immediate electron acceptor for the enzyme in this species is believed to be plastoquinone. Couples the redox reaction to proton translocation, and thus conserves the redox energy in a proton gradient. In Aethionema cordifolium (Lebanon stonecress), this protein is NAD(P)H-quinone oxidoreductase subunit H, chloroplastic.